The following is a 192-amino-acid chain: Late embryogenesis abundant protein 47 (192 aa).

The Nuclear localization signal (NLS) motif lies at 5-9 (QLQKP). 2 SMP domains span residues 68 to 125 (ITIG…LNAR) and 133 to 190 (TTLA…RINQ). The interval 146 to 174 (LPSDKAATRKDAEGVTGAEMRNDPHLTTY) is disordered. Basic and acidic residues predominate over residues 147–158 (PSDKAATRKDAE).

This sequence belongs to the LEA type SMP family.

The protein localises to the cytoplasm. Its subcellular location is the nucleus. Its function is as follows. LEA proteins are late embryonic proteins abundant in higher plant seed embryos. The function of those proteins is not known. This Arabidopsis thaliana (Mouse-ear cress) protein is Late embryogenesis abundant protein 47.